The chain runs to 336 residues: tRNA N6-adenosine threonylcarbamoyltransferase (336 aa).

Fe cation-binding residues include histidine 114 and histidine 118. Substrate-binding positions include 136–140 (LVSGG), aspartate 169, glycine 182, aspartate 186, and asparagine 275. Aspartate 301 provides a ligand contact to Fe cation.

The protein belongs to the KAE1 / TsaD family. Requires Fe(2+) as cofactor.

It localises to the cytoplasm. The enzyme catalyses L-threonylcarbamoyladenylate + adenosine(37) in tRNA = N(6)-L-threonylcarbamoyladenosine(37) in tRNA + AMP + H(+). In terms of biological role, required for the formation of a threonylcarbamoyl group on adenosine at position 37 (t(6)A37) in tRNAs that read codons beginning with adenine. Is involved in the transfer of the threonylcarbamoyl moiety of threonylcarbamoyl-AMP (TC-AMP) to the N6 group of A37, together with TsaE and TsaB. TsaD likely plays a direct catalytic role in this reaction. This is tRNA N6-adenosine threonylcarbamoyltransferase from Streptococcus pneumoniae (strain Taiwan19F-14).